We begin with the raw amino-acid sequence, 211 residues long: Large ribosomal subunit protein uL3 (211 aa).

The interval 126 to 147 (HGQSRGPMAHGSRYHRRPGSMG) is disordered.

It belongs to the universal ribosomal protein uL3 family. In terms of assembly, part of the 50S ribosomal subunit. Forms a cluster with proteins L14 and L19.

In terms of biological role, one of the primary rRNA binding proteins, it binds directly near the 3'-end of the 23S rRNA, where it nucleates assembly of the 50S subunit. The protein is Large ribosomal subunit protein uL3 of Geobacillus thermodenitrificans (strain NG80-2).